The chain runs to 85 residues: MAHKKGVGSSRNGRDSNPKMLGVKRFGGERVKPGMIIVRQRGTKFKPGANVGLGRDYTIYSLIDGVVTFEQHSRNQKRVSVYAAE.

The segment at 1–25 is disordered; sequence MAHKKGVGSSRNGRDSNPKMLGVKR.

It belongs to the bacterial ribosomal protein bL27 family.

This Roseiflexus castenholzii (strain DSM 13941 / HLO8) protein is Large ribosomal subunit protein bL27.